The sequence spans 532 residues: MVADNIDAGVAIAVADQSSSPVGDKVELPAGNYILVGVDIDTTGRRLMDEIVQLAAYTPTDHFEQYIMPYMNLNPAARQRHQVRVISIGFYRMLKSMQTYKIIKSKSEIAALKDFLNWLEQLKTKAGPSSDGIVLIYHEERKFIPYMILESLKKYGLLERFTASVKSFANSINLAKASIGDANIKNYSLRKLSKILSTTKEEDAACSASTSGSGSGLGSGSSMVSDSVSISPRDSTVTNGDDKQSSKNAVQGKRELFDGNASVRAKLAFDVALQLSNSDGKPEPKSSEALENMFNAIRPFAKLVVSDVLELDIQIENLERQNSFRPVFLNYFKTTLYHRVRAVKFRIVLAENGFDLNTLSAIWAEKNIEGLDIALQSIGRLKSKDKAELLELLDSYFDPKKTTVKPVVKGNSNNNNNYRRRNRRGGRQSVKDARPSSSPSASTEFGAGGDKSRSVSSLPDSTTKTPSPNKPRMHRKRNSRQSLGATPNGLKVAAEISSSGVSELNNSAPPAVTISPVVAQPSPTPVAITASN.

Disordered regions lie at residues 206–251 and 403–491; these read CSAS…NAVQ and TVKP…NGLK. Low complexity-rich tracts occupy residues 220–231 and 404–417; these read GSSMVSDSVSIS and VKPV…NNNN. Over residues 454 to 467 the composition is skewed to polar residues; that stretch reads SVSSLPDSTTKTPS. Ser467 is modified (phosphoserine).

Component of the osk RNP complex, which is composed of at least exuperantia (exu), ypsilon schachtel (yps), aret (bruno), cup, and the mRNA of osk. In the sponge body, forms a ribonucleoprotein complex (RNP) containing at least me31B, exu, yps and the mRNA of osk; interactions with exu and yps are RNA dependent.

It localises to the cytoplasm. Its subcellular location is the cytoplasmic ribonucleoprotein granule. Functionally, ensures the proper localization of the mRNA of the bicoid gene to the anterior regions of the oocyte thus playing a fundamental role in the establishment of the polarity of the oocyte. May bind the bcd mRNA. The chain is Maternal protein exuperantia (exu) from Drosophila melanogaster (Fruit fly).